A 157-amino-acid polypeptide reads, in one-letter code: uncharacterized protein (157 aa).

The N-terminal stretch at M1–A26 is a signal peptide.

The protein localises to the secreted. This is an uncharacterized protein from Homo sapiens (Human).